A 460-amino-acid chain; its full sequence is Sexual development regulator velC (460 aa).

3 disordered regions span residues 67–131, 152–216, and 422–460; these read VGPD…PQAP, YAPR…RPDP, and KKGN…SARQ. The segment covering 192 to 207 has biased composition (polar residues); it reads PVTTNGRPPDSNSPMV. The 184-residue stretch at 239–422 folds into the Velvet domain; sequence LSDNRFNLQI…KEQGCIISIK (184 aa). A compositionally biased stretch (basic and acidic residues) spans 423–437; it reads KGNDRSKNTRSHDDS. The span at 451-460 shows a compositional bias: basic residues; it reads GKRRRRSARQ.

Belongs to the velvet family. VelC subfamily. As to quaternary structure, interacts with VE1.

Its subcellular location is the nucleus. Velvet-domain-containing protein that acts as a positive regulator of sexual development. Dispensable for regulation of conidial size, hyphal hydrophobicity, fumonisin production, and oxidant resistance. This Gibberella moniliformis (strain M3125 / FGSC 7600) (Maize ear and stalk rot fungus) protein is Sexual development regulator velC.